The sequence spans 364 residues: Dual-specificity RNA methyltransferase RlmN (364 aa).

The active-site Proton acceptor is glutamate 91. Positions 97-333 constitute a Radical SAM core domain; sequence EDDRGTLCVS…VTVRKTRGDD (237 aa). A disulfide bridge links cysteine 104 with cysteine 338. [4Fe-4S] cluster-binding residues include cysteine 111, cysteine 115, and cysteine 118. S-adenosyl-L-methionine-binding positions include 164 to 165, serine 196, 218 to 220, and asparagine 295; these read GE and SLH. The active-site S-methylcysteine intermediate is cysteine 338.

It belongs to the radical SAM superfamily. RlmN family. The cofactor is [4Fe-4S] cluster.

The protein localises to the cytoplasm. The catalysed reaction is adenosine(2503) in 23S rRNA + 2 reduced [2Fe-2S]-[ferredoxin] + 2 S-adenosyl-L-methionine = 2-methyladenosine(2503) in 23S rRNA + 5'-deoxyadenosine + L-methionine + 2 oxidized [2Fe-2S]-[ferredoxin] + S-adenosyl-L-homocysteine. It catalyses the reaction adenosine(37) in tRNA + 2 reduced [2Fe-2S]-[ferredoxin] + 2 S-adenosyl-L-methionine = 2-methyladenosine(37) in tRNA + 5'-deoxyadenosine + L-methionine + 2 oxidized [2Fe-2S]-[ferredoxin] + S-adenosyl-L-homocysteine. Specifically methylates position 2 of adenine 2503 in 23S rRNA and position 2 of adenine 37 in tRNAs. m2A2503 modification seems to play a crucial role in the proofreading step occurring at the peptidyl transferase center and thus would serve to optimize ribosomal fidelity. The chain is Dual-specificity RNA methyltransferase RlmN from Chromobacterium violaceum (strain ATCC 12472 / DSM 30191 / JCM 1249 / CCUG 213 / NBRC 12614 / NCIMB 9131 / NCTC 9757 / MK).